Consider the following 199-residue polypeptide: NAD(P)H dehydrogenase (quinone) (199 aa).

The Flavodoxin-like domain maps to 4-190 (VLVLYYSTYG…DGARFLGQHV (187 aa)). FMN-binding positions include 10–15 (STYGHI) and 78–80 (TRF). Residue Y12 participates in NAD(+) binding. Residue W98 participates in substrate binding. FMN-binding positions include 113 to 119 (STATQHG) and H134.

It belongs to the WrbA family. FMN serves as cofactor.

The catalysed reaction is a quinone + NADH + H(+) = a quinol + NAD(+). The enzyme catalyses a quinone + NADPH + H(+) = a quinol + NADP(+). The protein is NAD(P)H dehydrogenase (quinone) of Gluconacetobacter diazotrophicus (strain ATCC 49037 / DSM 5601 / CCUG 37298 / CIP 103539 / LMG 7603 / PAl5).